The sequence spans 107 residues: Diuretic hormone 45 (107 aa).

Residues 1-44 constitute a propeptide that is removed on maturation; the sequence is LYAMSPMAARYSAGAPWLYLLADMPRDSQRLVDPADLHEGRARP. Valine amide is present on V91.

Expressed in corpora cardiaca (CC), corpora allata (CA), antennal lobe (AL) and gnathal ganglion (GNG) (at protein level). Expression in AL and GNG detected in some animals, in CC and CA in few animals (at protein level).

The protein localises to the secreted. Functionally, regulation of fluid secretion. The chain is Diuretic hormone 45 from Agrotis ipsilon (Black cutworm moth).